We begin with the raw amino-acid sequence, 263 residues long: Small ribosomal subunit protein bS1c (263 aa).

S1 motif domains follow at residues 27-96 (GDIV…LSIR), 114-178 (DSLL…LSHR), and 192-260 (GNII…LSMK).

This sequence belongs to the bacterial ribosomal protein bS1 family.

The protein localises to the plastid. It is found in the chloroplast. The polypeptide is Small ribosomal subunit protein bS1c (rps1) (Pyropia yezoensis (Susabi-nori)).